Consider the following 350-residue polypeptide: tRNA uridine(34) hydroxylase (350 aa).

The region spanning 146–240 (DDPDALFIDM…YARKAREQGL (95 aa)) is the Rhodanese domain. C200 acts as the Cysteine persulfide intermediate in catalysis.

Belongs to the TrhO family.

The catalysed reaction is uridine(34) in tRNA + AH2 + O2 = 5-hydroxyuridine(34) in tRNA + A + H2O. Catalyzes oxygen-dependent 5-hydroxyuridine (ho5U) modification at position 34 in tRNAs. This Shigella sonnei (strain Ss046) protein is tRNA uridine(34) hydroxylase.